The primary structure comprises 490 residues: MTDLTDLTLAAALDGLKSKQFSSAEITGAFLQAMEKSRVLNAYVVETPEKAMEMARASDARIAKGEGGRLEGAPLGIKDLYCTKGVRTTACSNILGEFTPTYESTVTQNLWDEGAVMLGKLNMDEFAMGSSNETSRFGPPINPWRRKGDNAGLTPGGSSGGSAAAVSGNLCLAATASDTGGSIRQPASFTGTVGIKPTYGRASRYGMVAFASSLDQAGPIAKTVEDSALLLEIMCSHDPKDSTSLKVETPDWRSDVRKGVKGMKIGIPKEYRIEGLSEEIEALWQQGIAWLKAAGAEIVEISLPHTKYALPAYYIVAPAEASSNLARYDGMRYGARVEGNNLTQTYEASRASGFGKEVQRRLMIGTYVLSSGYYDAYYLRAQKVRAKIFQDFVGAFEQCDAILTPACPSTAFAFGEKSGDPLEMYLMDVFTVTANLAGLPGISVPAGLSASGLPLGLQVIGKALDESACFRVGGVLEDAASFVAKPDRWW.

Residues lysine 78 and serine 158 each act as charge relay system in the active site. The interval 131–159 (SNETSRFGPPINPWRRKGDNAGLTPGGSS) is disordered. The Acyl-ester intermediate role is filled by serine 182.

Belongs to the amidase family. GatA subfamily. Heterotrimer of A, B and C subunits.

The enzyme catalyses L-glutamyl-tRNA(Gln) + L-glutamine + ATP + H2O = L-glutaminyl-tRNA(Gln) + L-glutamate + ADP + phosphate + H(+). Allows the formation of correctly charged Gln-tRNA(Gln) through the transamidation of misacylated Glu-tRNA(Gln) in organisms which lack glutaminyl-tRNA synthetase. The reaction takes place in the presence of glutamine and ATP through an activated gamma-phospho-Glu-tRNA(Gln). This is Glutamyl-tRNA(Gln) amidotransferase subunit A from Hyphomonas neptunium (strain ATCC 15444).